The following is a 103-amino-acid chain: UPF0145 protein BCE_5284 (103 aa).

It belongs to the UPF0145 family.

The sequence is that of UPF0145 protein BCE_5284 from Bacillus cereus (strain ATCC 10987 / NRS 248).